Consider the following 68-residue polypeptide: DNA-directed RNA polymerase subunit omega (68 aa).

It belongs to the RNA polymerase subunit omega family. The RNAP catalytic core consists of 2 alpha, 1 beta, 1 beta' and 1 omega subunit. When a sigma factor is associated with the core the holoenzyme is formed, which can initiate transcription.

The enzyme catalyses RNA(n) + a ribonucleoside 5'-triphosphate = RNA(n+1) + diphosphate. Promotes RNA polymerase assembly. Latches the N- and C-terminal regions of the beta' subunit thereby facilitating its interaction with the beta and alpha subunits. The chain is DNA-directed RNA polymerase subunit omega from Neisseria gonorrhoeae (strain NCCP11945).